The chain runs to 450 residues: MYTKDTIVAVATPQGNGGIGIVRISGSDALSIAEKLTKKRLKPRYATFCNIYNINEIIDHGIVIFFNSPNSYTGEDVVEIQAHGNPFILNLIIKATLEYGARMANAGEFTERAFLNNKLDLTQAEAVADIINASSETAAKSAAKSLQGDFSKEINNLLEKLIYLRMYVEASIDFPEEEINFLEDQKIHNSLQDIYKTILDVKNSCKQGAILVEGITLILVGKPNAGKSSLLNALAGKESAIVTSIAGTTRDIVKEHIQINGVPMHIIDTAGLRSSDDIIESEGIKRAIKKIQEADQILFVTDDYTNSQVKFSDIKDIIPEFYHQIPKDIDITYVHNKIDLLKEVPLNHDNHIYISAESNIGIDKLKDHILAKVGYTTQNESIYTARERHVTAIDNAFDHIKLAKEQLELGNGELLAEELLIVQEHLNSITGEFSSDDLLGEIFSSFCIGK.

The (6S)-5-formyl-5,6,7,8-tetrahydrofolate site is built by arginine 23, glutamate 79, and lysine 118. Residues 214 to 374 (GITLILVGKP…LKDHILAKVG (161 aa)) form the TrmE-type G domain. A K(+)-binding site is contributed by asparagine 224. GTP is bound by residues 224–229 (NAGKSS), 243–249 (TSIAGTT), and 268–271 (DTAG). A Mg(2+)-binding site is contributed by serine 228. Positions 243, 245, and 248 each coordinate K(+). Threonine 249 is a binding site for Mg(2+). Lysine 450 is a binding site for (6S)-5-formyl-5,6,7,8-tetrahydrofolate.

The protein belongs to the TRAFAC class TrmE-Era-EngA-EngB-Septin-like GTPase superfamily. TrmE GTPase family. Homodimer. Heterotetramer of two MnmE and two MnmG subunits. It depends on K(+) as a cofactor.

The protein localises to the cytoplasm. Its function is as follows. Exhibits a very high intrinsic GTPase hydrolysis rate. Involved in the addition of a carboxymethylaminomethyl (cmnm) group at the wobble position (U34) of certain tRNAs, forming tRNA-cmnm(5)s(2)U34. This chain is tRNA modification GTPase MnmE, found in Francisella philomiragia subsp. philomiragia (strain ATCC 25017 / CCUG 19701 / FSC 153 / O#319-036).